The sequence spans 137 residues: MPTINQLVRKPRKSKVEKSKSPALNVGYNSLKRVPTNESAPQKRGVATRVGTMTPKKPNSALRKFARVRLSNLIEVTAYIPGIGHNLQEHSVVLLRGGRVKDLPGVRYHIVRGALDTAGVTDRKQGRSKYGTKKPKA.

The disordered stretch occupies residues 1–57 (MPTINQLVRKPRKSKVEKSKSPALNVGYNSLKRVPTNESAPQKRGVATRVGTMTPKK). Aspartate 102 is subject to 3-methylthioaspartic acid.

Belongs to the universal ribosomal protein uS12 family. In terms of assembly, part of the 30S ribosomal subunit. Contacts proteins S8 and S17. May interact with IF1 in the 30S initiation complex.

In terms of biological role, with S4 and S5 plays an important role in translational accuracy. Its function is as follows. Interacts with and stabilizes bases of the 16S rRNA that are involved in tRNA selection in the A site and with the mRNA backbone. Located at the interface of the 30S and 50S subunits, it traverses the body of the 30S subunit contacting proteins on the other side and probably holding the rRNA structure together. The combined cluster of proteins S8, S12 and S17 appears to hold together the shoulder and platform of the 30S subunit. The sequence is that of Small ribosomal subunit protein uS12 from Streptococcus gordonii (strain Challis / ATCC 35105 / BCRC 15272 / CH1 / DL1 / V288).